A 483-amino-acid polypeptide reads, in one-letter code: Elastin-binding protein EbpS (483 aa).

Residues 1-40 are compositionally biased toward basic and acidic residues; sequence MSNNFKDDFEKNRQSIDTNSHQDHTEEVEKDQSELEHQDT. Positions 1 to 311 are disordered; it reads MSNNFKDDFE…HHDRDKERKK (311 aa). The elastin-binding stretch occupies residues 14–34; it reads QSIDTNSHQDHTEEVEKDQSE. Polar residues predominate over residues 64–85; the sequence is TNHNKQVHNESQTSEDNVQNEA. Basic and acidic residues-rich tracts occupy residues 103–118, 126–160, and 180–199; these read EPSHQDSTPQHEEEYY, DKSHPEPIEDNDKHETVKDAENNTEHSTVSDKSEA, and SKDKHDDVTVKQYKDESKDH. A compositionally biased stretch (low complexity) spans 204–222; sequence KGAAIGAGTAGVAGAMAAS. Over residues 230–243 the composition is skewed to polar residues; sequence DAQNKSNSGKANNS. Residues 244-256 are compositionally biased toward basic and acidic residues; sequence TEDKASQDKSKEH. Over residues 275-294 the composition is skewed to low complexity; the sequence is GAASKSASAASKPHASNNAS. Residues 296–311 show a composition bias toward basic and acidic residues; sequence NHDEHDHHDRDKERKK. The helical transmembrane segment at 317 to 337 threads the bilayer; that stretch reads VLLPLIAAVLIIGALAIFGGM. The tract at residues 348–437 is disordered; it reads ENKIANTNKN…QRQGGGQRHT (90 aa). The segment covering 358-395 has biased composition (basic and acidic residues); the sequence is NADESKDKDTSKDASKDKSKSTDSDKSKEDQDKATKDE. Residues 400–428 show a composition bias toward low complexity; the sequence is QNNANQANNQAQNNQNQQQANQNQQQQQQ. The LysM domain maps to 434-482; the sequence is QRHTVNGQENLYRIAIQYYGSGSPENVEKIRRANGLSGNNIRNGQQIVI.

Its subcellular location is the cell membrane. Functionally, promotes binding of soluble elastin peptides and tropoelastin to S.aureus cells although it is not able to promote bacterial adherence to immobilized elastin and, therefore, is not a microbial surface component recognizing adhesive matrix molecule (MSCRAMM). This Staphylococcus aureus (strain bovine RF122 / ET3-1) protein is Elastin-binding protein EbpS (ebpS).